Reading from the N-terminus, the 308-residue chain is Autophagy-related protein 3 (308 aa).

The interval 83-159 is flexible region; it reads NFVETQTTET…NELADDDDDI (77 aa). Residues 89 to 121 are disordered; that stretch reads TTETRDVGDGWELEGQSEGERESGREDTKSNEE. The span at 106–120 shows a compositional bias: basic and acidic residues; it reads EGERESGREDTKSNE. C235 serves as the catalytic Glycyl thioester intermediate. Positions 239–283 are handle region; sequence NVMKVLMEKVRASRHRARDTEAQKNAEEDWEDLQSDIDDGLRVDQ.

This sequence belongs to the ATG3 family. As to quaternary structure, monomer. Interacts with ATG8 through an intermediate thioester bond between Cys-235 and the C-terminal Gly of ATG8. Interacts with the C-terminal region of the E1-like ATG7 enzyme. Also interacts with the ATG12-ATG5 conjugate.

The protein localises to the cytoplasm. E2 conjugating enzyme required for the cytoplasm to vacuole transport (Cvt) and autophagy. Required for selective autophagic degradation of the nucleus (nucleophagy) as well as for mitophagy which contributes to regulate mitochondrial quantity and quality by eliminating the mitochondria to a basal level to fulfill cellular energy requirements and preventing excess ROS production. Responsible for the E2-like covalent binding of phosphatidylethanolamine to the C-terminal Gly of ATG8. The ATG12-ATG5 conjugate plays a role of an E3 and promotes the transfer of ATG8 from ATG3 to phosphatidylethanolamine (PE). This step is required for the membrane association of ATG8. The formation of the ATG8-phosphatidylethanolamine conjugate is essential for autophagy and for the cytoplasm to vacuole transport (Cvt). The ATG8-PE conjugate mediates tethering between adjacent membranes and stimulates membrane hemifusion, leading to expansion of the autophagosomal membrane during autophagy. This chain is Autophagy-related protein 3, found in Kluyveromyces marxianus (strain DMKU3-1042 / BCC 29191 / NBRC 104275) (Yeast).